Consider the following 186-residue polypeptide: Holliday junction branch migration complex subunit RuvA (186 aa).

A domain I region spans residues 1-61 (MYRYIKGIVT…EDIFQLYGFK (61 aa)). Positions 62–134 (DEETLNLFLK…LKGKLVNDEL (73 aa)) are domain II. Residues 134-137 (LDMQ) form a flexible linker region. Positions 138–186 (LLSDNSKDVAAALEALGYNKKEIAKSLKHVNFDQDLNKALKEALAILLK) are domain III.

This sequence belongs to the RuvA family. Homotetramer. Forms an RuvA(8)-RuvB(12)-Holliday junction (HJ) complex. HJ DNA is sandwiched between 2 RuvA tetramers; dsDNA enters through RuvA and exits via RuvB. An RuvB hexamer assembles on each DNA strand where it exits the tetramer. Each RuvB hexamer is contacted by two RuvA subunits (via domain III) on 2 adjacent RuvB subunits; this complex drives branch migration. In the full resolvosome a probable DNA-RuvA(4)-RuvB(12)-RuvC(2) complex forms which resolves the HJ.

Its subcellular location is the cytoplasm. The RuvA-RuvB-RuvC complex processes Holliday junction (HJ) DNA during genetic recombination and DNA repair, while the RuvA-RuvB complex plays an important role in the rescue of blocked DNA replication forks via replication fork reversal (RFR). RuvA specifically binds to HJ cruciform DNA, conferring on it an open structure. The RuvB hexamer acts as an ATP-dependent pump, pulling dsDNA into and through the RuvAB complex. HJ branch migration allows RuvC to scan DNA until it finds its consensus sequence, where it cleaves and resolves the cruciform DNA. The polypeptide is Holliday junction branch migration complex subunit RuvA (Acholeplasma laidlawii (strain PG-8A)).